A 497-amino-acid polypeptide reads, in one-letter code: Bypass of stop codon protein 6 (497 aa).

Topologically, residues 1–72 (MDASSVPPKV…KVKTYPLNYQ (72 aa)) are lumenal. A phosphoserine mark is found at S37 and S41. N-linked (GlcNAc...) asparagine glycosylation occurs at N49. A helical transmembrane segment spans residues 73–93 (TVPLVKLQVIACLIMFVVFGM). The Cytoplasmic portion of the chain corresponds to 94–144 (NDQTVGALLPTLIEYYHISRVDVSNVFIVQLCGYVMASLSKERLNKHFGMR). Residues 145-165 (GGMLLAAGLCIVFLIILATAP) form a helical membrane-spanning segment. At 166 to 167 (SS) the chain is on the lumenal side. Residues 168–188 (FYVCMFCGLPLGLGIGILDST) form a helical membrane-spanning segment. Over 189–205 (GNVLMGSLLVHKNELMG) the chain is Cytoplasmic. Residues 206–226 (IMHGLYGAAAMVTPPLVSYFV) form a helical membrane-spanning segment. Residues 227–232 (EWGHWS) are Lumenal-facing. A helical membrane pass occupies residues 233–253 (LFFLIPLFFSIIGMIVIFPAF). Topologically, residues 254-300 (KFETASKYDYLCSVENKESNNDVEEAGDNSLMESTKASPGFFELLRN) are cytoplasmic. The chain crosses the membrane as a helical span at residues 301–321 (PAIFLYSLYLFLYLGAEITTG). Over 322 to 340 (SWFFSYLLETKSSNKVAMS) the chain is Lumenal. The helical transmembrane segment at 341–361 (YIAASFWTGLTVGRLCLGFVT) threads the bilayer. The Cytoplasmic segment spans residues 362-373 (ERFFENEYKASK). Residues 374-394 (AYAFLTLSSYTLFVLVGLINS) traverse the membrane as a helical segment. The Lumenal portion of the chain corresponds to 395–397 (SSV). A helical transmembrane segment spans residues 398–418 (FYFVVLFFVVFCCGTFIGPLF). At 419-439 (PNASIVALQVLPKRLHVSGVG) the chain is on the cytoplasmic side. Residues 440–460 (VAVAVGGCGGAAIPYLAGVIA) traverse the membrane as a helical segment. At 461 to 462 (HT) the chain is on the lumenal side. Residues 463-483 (VGIQYIPLLCWIMVALFTLEW) traverse the membrane as a helical segment. Residues 484-497 (TLYPKFIKGHEEYF) lie on the Cytoplasmic side of the membrane.

The protein belongs to the major facilitator superfamily.

The protein resides in the golgi apparatus. The protein localises to the cis-Golgi network membrane. Probable transporter. This is Bypass of stop codon protein 6 (BSC6) from Saccharomyces cerevisiae (strain ATCC 204508 / S288c) (Baker's yeast).